The chain runs to 204 residues: Intraflagellar transport protein 27 (204 aa).

Residues 23–30, 75–79, and 136–139 each bind GTP; these read GEATVGKS, DTAGS, and NKTD.

This sequence belongs to the small GTPase superfamily. Rab family. As to quaternary structure, component of the IFT complex B, the core composed of IFT25, IFT27, IFT46, IFT52, IFT74, IFT81 and IFT88 as well as associated subunits IFT20, IFT57, IFT80 and IFT172. Interacts with IFT25; the interaction is direct.

It is found in the cell projection. It localises to the cilium. The protein localises to the flagellum. Its subcellular location is the cytoplasm. The protein resides in the cytoskeleton. It is found in the flagellum basal body. In terms of biological role, small GTPase-like component of the intraflagellar transport (IFT) complex B. Forms a subcomplex within the IFT complex B with IFT25. Has very low GTPase activity either because it lacks the conserved catalytic Gln in position 79 or because it requires some GTPase-activating protein (GAP) for GTP turnover. The protein is Intraflagellar transport protein 27 (IFT27) of Chlamydomonas reinhardtii (Chlamydomonas smithii).